The primary structure comprises 693 residues: Golgin subfamily A member 6C (693 aa).

3 disordered regions span residues 20 to 71 (NKLA…DSQY), 497 to 547 (LPGE…GTEQ), and 629 to 693 (NPAD…MQDT). Residues 73–611 (ELAVALESSS…KLLELQELVL (539 aa)) are a coiled coil. Residues 537–547 (LPKEKADGTEQ) are compositionally biased toward basic and acidic residues. Residues 679 to 693 (PVQQIVQLSPVMQDT) show a composition bias toward polar residues.

It belongs to the GOLGA6 family.

This chain is Golgin subfamily A member 6C (GOLGA6C), found in Homo sapiens (Human).